Reading from the N-terminus, the 264-residue chain is Probable pectate lyase D (264 aa).

Residues 1–17 form the signal peptide; it reads MFFKQLAVLSFATSALA. N-linked (GlcNAc...) asparagine glycosylation occurs at N60. Positions 234–264 are disordered; that stretch reads YEGTDNNDEEPQEISTGPSNACQYTDPLPSC. The segment covering 235–245 has biased composition (acidic residues); sequence EGTDNNDEEPQ. The span at 246 to 256 shows a compositional bias: polar residues; the sequence is EISTGPSNACQ.

Belongs to the polysaccharide lyase 3 family. Requires Ca(2+) as cofactor.

It is found in the secreted. It carries out the reaction Eliminative cleavage of (1-&gt;4)-alpha-D-galacturonan to give oligosaccharides with 4-deoxy-alpha-D-galact-4-enuronosyl groups at their non-reducing ends.. Its function is as follows. Pectinolytic enzyme consist of four classes of enzymes: pectin lyase, polygalacturonase, pectin methylesterase and rhamnogalacturonase. Among pectinolytic enzymes, pectin lyase is the most important in depolymerization of pectin, since it cleaves internal glycosidic bonds of highly methylated pectins. Favors pectate, the anion, over pectin, the methyl ester. The sequence is that of Probable pectate lyase D (plyD) from Emericella nidulans (strain FGSC A4 / ATCC 38163 / CBS 112.46 / NRRL 194 / M139) (Aspergillus nidulans).